A 473-amino-acid polypeptide reads, in one-letter code: Ras-GEF domain-containing family member 1B (473 aa).

The N-terminal Ras-GEF domain occupies 34 to 161; that stretch reads HDNNLLSGSL…NVQQMMQCLI (128 aa). The 249-residue stretch at 205-453 folds into the Ras-GEF domain; sequence DPYTLAQQLT…YLASYESEGP (249 aa).

Interacts with CCDC124 during cytokinesis. Interacts with Ras family proteins. Constitutively expressed in brain, intestine and testis. Low constitutive expression, if any, in heart, lung, lymph nodes and thymus. Up-regulated in heart, kidney, liver, lymph nodes, spleen and thymus at day 20 after infection with Trypanosoma cruzi. Not detected in muscle.

It localises to the early endosome. The protein resides in the late endosome. Its subcellular location is the midbody. Functionally, guanine nucleotide exchange factor (GEF) with specificity for RAP2A, it doesn't seems to activate other Ras family proteins (in vitro). In Mus musculus (Mouse), this protein is Ras-GEF domain-containing family member 1B (Rasgef1b).